The primary structure comprises 149 residues: UPF0178 protein Psyc_0274 (149 aa).

This sequence belongs to the UPF0178 family.

The protein is UPF0178 protein Psyc_0274 of Psychrobacter arcticus (strain DSM 17307 / VKM B-2377 / 273-4).